The chain runs to 308 residues: tRNA pseudouridine synthase B (308 aa).

The active-site Nucleophile is the Asp48.

This sequence belongs to the pseudouridine synthase TruB family. Type 1 subfamily.

The enzyme catalyses uridine(55) in tRNA = pseudouridine(55) in tRNA. Functionally, responsible for synthesis of pseudouridine from uracil-55 in the psi GC loop of transfer RNAs. This is tRNA pseudouridine synthase B from Histophilus somni (strain 129Pt) (Haemophilus somnus).